Here is a 396-residue protein sequence, read N- to C-terminus: Elongation factor Tu (396 aa).

In terms of domain architecture, tr-type G spans 10–205 (KPHVNIGTIG…ACDESIPDPE (196 aa)). The segment at 19-26 (GHVDHGKT) is G1. 19-26 (GHVDHGKT) contacts GTP. Thr26 contributes to the Mg(2+) binding site. Positions 62–66 (GITIN) are G2. The segment at 83–86 (DAPG) is G3. Residues 83–87 (DAPGH) and 138–141 (NKCD) contribute to the GTP site. The interval 138 to 141 (NKCD) is G4. Residues 175–177 (SAL) are G5.

Belongs to the TRAFAC class translation factor GTPase superfamily. Classic translation factor GTPase family. EF-Tu/EF-1A subfamily. As to quaternary structure, monomer.

It localises to the cytoplasm. It carries out the reaction GTP + H2O = GDP + phosphate + H(+). Functionally, GTP hydrolase that promotes the GTP-dependent binding of aminoacyl-tRNA to the A-site of ribosomes during protein biosynthesis. The sequence is that of Elongation factor Tu from Corynebacterium jeikeium (strain K411).